The following is a 307-amino-acid chain: UDP-N-acetylenolpyruvoylglucosamine reductase (307 aa).

An FAD-binding PCMH-type domain is found at 33–198 (KVGGPVDILV…LEAILKLSLG (166 aa)). R177 is an active-site residue. The Proton donor role is filled by S227. E297 is a catalytic residue.

This sequence belongs to the MurB family. FAD is required as a cofactor.

It is found in the cytoplasm. It carries out the reaction UDP-N-acetyl-alpha-D-muramate + NADP(+) = UDP-N-acetyl-3-O-(1-carboxyvinyl)-alpha-D-glucosamine + NADPH + H(+). It participates in cell wall biogenesis; peptidoglycan biosynthesis. Its function is as follows. Cell wall formation. The protein is UDP-N-acetylenolpyruvoylglucosamine reductase of Clostridium tetani (strain Massachusetts / E88).